An 864-amino-acid polypeptide reads, in one-letter code: Protein PAT1 homolog 1 (864 aa).

Over residues 427–439 the composition is skewed to polar residues; it reads PPNSRPNGPQFSG. Disordered stretches follow at residues 427 to 460, 518 to 539, and 551 to 602; these read PPNS…SGMP, WTAH…SRKD, and EMQK…STHN. The span at 551–580 shows a compositional bias: basic and acidic residues; sequence EMQKERLRDREKERQRERQERIDRGEERKP.

This sequence belongs to the PAT1 family.

It is found in the cytoplasm. Its subcellular location is the P-body. Functionally, RNA-binding protein involved in deadenylation-dependent decapping of mRNAs, leading to the degradation of mRNAs. Acts as a scaffold protein that connects deadenylation and decapping machinery. Required for the recruitment of P-body components such as cgh-1 in somatic blastomeres. May play a role in recruiting the decapping enzyme dcap-1 to cytoplasmic puncta in the cell body of the posterior touch receptor neuron, PLM. The polypeptide is Protein PAT1 homolog 1 (patr-1) (Caenorhabditis briggsae).